We begin with the raw amino-acid sequence, 348 residues long: tRNA pseudouridine synthase D (348 aa).

Residue D78 is the Nucleophile of the active site. In terms of domain architecture, TRUD spans 150 to 304 (GLPNFFGPQR…AEGTRRAARL (155 aa)).

This sequence belongs to the pseudouridine synthase TruD family.

The catalysed reaction is uridine(13) in tRNA = pseudouridine(13) in tRNA. Responsible for synthesis of pseudouridine from uracil-13 in transfer RNAs. The chain is tRNA pseudouridine synthase D from Anaeromyxobacter dehalogenans (strain 2CP-1 / ATCC BAA-258).